The primary structure comprises 101 residues: NAD(P)H-quinone oxidoreductase subunit 4L, chloroplastic (101 aa).

The next 3 membrane-spanning stretches (helical) occupy residues 2 to 22 (MLEH…YGLI), 32 to 52 (MCLE…SDFF), and 61 to 81 (IFSI…LAIV).

It belongs to the complex I subunit 4L family. NDH is composed of at least 16 different subunits, 5 of which are encoded in the nucleus.

Its subcellular location is the plastid. It is found in the chloroplast thylakoid membrane. The catalysed reaction is a plastoquinone + NADH + (n+1) H(+)(in) = a plastoquinol + NAD(+) + n H(+)(out). It catalyses the reaction a plastoquinone + NADPH + (n+1) H(+)(in) = a plastoquinol + NADP(+) + n H(+)(out). Its function is as follows. NDH shuttles electrons from NAD(P)H:plastoquinone, via FMN and iron-sulfur (Fe-S) centers, to quinones in the photosynthetic chain and possibly in a chloroplast respiratory chain. The immediate electron acceptor for the enzyme in this species is believed to be plastoquinone. Couples the redox reaction to proton translocation, and thus conserves the redox energy in a proton gradient. This Panax ginseng (Korean ginseng) protein is NAD(P)H-quinone oxidoreductase subunit 4L, chloroplastic.